A 153-amino-acid chain; its full sequence is UPF0178 protein Atu1478 (153 aa).

Belongs to the UPF0178 family.

This Agrobacterium fabrum (strain C58 / ATCC 33970) (Agrobacterium tumefaciens (strain C58)) protein is UPF0178 protein Atu1478.